We begin with the raw amino-acid sequence, 194 residues long: MGMYKYIREAWKSPKKSYVGQLLKQRMIKWRREPAVVRIERPTRLDRARALGYQAKQGYVIVRVRVRRGGRKRPRWKGGRKPSKMGQVKYSPKKSLQWIAEEKAARKFPNLEVLNSYWVGEDGMYKWFEVIMVDPHHPVIKSDPKIAWIALKHHKGRVFRGLTSAGKKGRGLRNKGKGAEKIRPSIRANEGKGK.

Residues 164–194 (SAGKKGRGLRNKGKGAEKIRPSIRANEGKGK) are disordered. Positions 167–176 (KKGRGLRNKG) are enriched in basic residues. Basic and acidic residues predominate over residues 177–194 (KGAEKIRPSIRANEGKGK).

The protein belongs to the eukaryotic ribosomal protein eL15 family.

The protein is Large ribosomal subunit protein eL15 (rpl15e) of Pyrococcus abyssi (strain GE5 / Orsay).